Here is an 82-residue protein sequence, read N- to C-terminus: NAAKTIADIIRTCLGPKSMMKMLLDPMGGIVMTNDGNAILREIQVQHPAAKSMIEISRTQDEEVGDGTTSVIILAGEMLSVA.

G15 contacts ADP. G15 provides a ligand contact to ATP. D66 serves as a coordination point for Mg(2+). ADP contacts are provided by G67, T68, T69, and S70. 3 residues coordinate ATP: G67, T68, and T69.

This sequence belongs to the TCP-1 chaperonin family. As to quaternary structure, component of the chaperonin-containing T-complex (TRiC), a hexadecamer composed of two identical back-to-back stacked rings enclosing a protein folding chamber. Each ring is made up of eight different subunits: TCP1/CCT1, CCT2, CCT3, CCT4, CCT5, CCT6A/CCT6, CCT7, CCT8. Interacts with PACRG. Interacts with DNAAF4. Interacts with DLEC1.

Its subcellular location is the cytoplasm. It catalyses the reaction ATP + H2O = ADP + phosphate + H(+). In terms of biological role, component of the chaperonin-containing T-complex (TRiC), a molecular chaperone complex that assists the folding of actin, tubulin and other proteins upon ATP hydrolysis. The TRiC complex mediates the folding of WRAP53/TCAB1, thereby regulating telomere maintenance. As part of the TRiC complex may play a role in the assembly of BBSome, a complex involved in ciliogenesis regulating transports vesicles to the cilia. This is T-complex protein 1 subunit gamma (CCT3) from Sus scrofa (Pig).